The primary structure comprises 266 residues: Undecaprenyl-diphosphatase (266 aa).

A run of 8 helical transmembrane segments spans residues 2 to 22 (INIL…FLPI), 39 to 59 (LPII…IIYY), 86 to 106 (LKLI…GTFI), 112 to 132 (MFIL…ILML), 145 to 165 (ILLV…PGIS), 184 to 204 (AFEI…LFKY), 212 to 232 (MVLN…VGII), and 246 to 266 (LYYF…FFRI).

The protein belongs to the UppP family.

The protein localises to the cell inner membrane. The enzyme catalyses di-trans,octa-cis-undecaprenyl diphosphate + H2O = di-trans,octa-cis-undecaprenyl phosphate + phosphate + H(+). In terms of biological role, catalyzes the dephosphorylation of undecaprenyl diphosphate (UPP). Confers resistance to bacitracin. This Borrelia garinii subsp. bavariensis (strain ATCC BAA-2496 / DSM 23469 / PBi) (Borreliella bavariensis) protein is Undecaprenyl-diphosphatase.